A 234-amino-acid chain; its full sequence is Urease accessory protein UreF (234 aa).

Belongs to the UreF family. In terms of assembly, ureD, UreF and UreG form a complex that acts as a GTP-hydrolysis-dependent molecular chaperone, activating the urease apoprotein by helping to assemble the nickel containing metallocenter of UreC. The UreE protein probably delivers the nickel.

The protein resides in the cytoplasm. In terms of biological role, required for maturation of urease via the functional incorporation of the urease nickel metallocenter. This Azoarcus sp. (strain BH72) protein is Urease accessory protein UreF.